The chain runs to 711 residues: DNA topoisomerase 3 (711 aa).

Positions 2–135 (KSLILAEKPS…IKRLWISSVT (134 aa)) constitute a Toprim domain. Positions 8 and 104 each coordinate Mg(2+). The Topo IA-type catalytic domain maps to 152–580 (YQNLYEAALA…EMKNFTFKVV (429 aa)). The interaction with DNA stretch occupies residues 186–191 (SLGRVQ). Tyr305 functions as the O-(5'-phospho-DNA)-tyrosine intermediate in the catalytic mechanism.

Belongs to the type IA topoisomerase family. Mg(2+) serves as cofactor.

It catalyses the reaction ATP-independent breakage of single-stranded DNA, followed by passage and rejoining.. In terms of biological role, releases the supercoiling and torsional tension of DNA, which is introduced during the DNA replication and transcription, by transiently cleaving and rejoining one strand of the DNA duplex. Introduces a single-strand break via transesterification at a target site in duplex DNA. The scissile phosphodiester is attacked by the catalytic tyrosine of the enzyme, resulting in the formation of a DNA-(5'-phosphotyrosyl)-enzyme intermediate and the expulsion of a 3'-OH DNA strand. The free DNA strand then undergoes passage around the unbroken strand, thus removing DNA supercoils. Finally, in the religation step, the DNA 3'-OH attacks the covalent intermediate to expel the active-site tyrosine and restore the DNA phosphodiester backbone. This chain is DNA topoisomerase 3, found in Staphylococcus epidermidis (strain ATCC 12228 / FDA PCI 1200).